We begin with the raw amino-acid sequence, 364 residues long: Small ribosomal subunit biogenesis GTPase RsgA (364 aa).

Positions 101–264 (KGLVEKPGVP…VIDTPGLREL (164 aa)) constitute a CP-type G domain. GTP contacts are provided by residues 154-157 (NKSD) and 206-214 (GSSGAGKST). Zn(2+)-binding residues include C288, C293, H295, and C301. The segment at 339–364 (QVAQKRKRKTIPRQGKRWRREHGDGQ) is disordered. Basic residues predominate over residues 342 to 358 (QKRKRKTIPRQGKRWRR).

Belongs to the TRAFAC class YlqF/YawG GTPase family. RsgA subfamily. As to quaternary structure, monomer. Associates with 30S ribosomal subunit, binds 16S rRNA. Zn(2+) serves as cofactor.

It localises to the cytoplasm. One of several proteins that assist in the late maturation steps of the functional core of the 30S ribosomal subunit. Helps release RbfA from mature subunits. May play a role in the assembly of ribosomal proteins into the subunit. Circularly permuted GTPase that catalyzes slow GTP hydrolysis, GTPase activity is stimulated by the 30S ribosomal subunit. The chain is Small ribosomal subunit biogenesis GTPase RsgA from Syntrophotalea carbinolica (strain DSM 2380 / NBRC 103641 / GraBd1) (Pelobacter carbinolicus).